Here is a 362-residue protein sequence, read N- to C-terminus: Aspartate-semialdehyde dehydrogenase (362 aa).

NADP(+)-binding residues include Thr-15, Gly-16, Ala-17, Val-18, Ser-40, Ser-43, Leu-87, and Asp-88. Cys-154 serves as the catalytic Acyl-thioester intermediate. Gly-186 is a binding site for NADP(+). His-251 acts as the Proton acceptor in catalysis. Residue Asn-340 coordinates NADP(+).

It belongs to the aspartate-semialdehyde dehydrogenase family. As to quaternary structure, homotetramer; dimer of dimers.

It is found in the cytoplasm. The protein localises to the cytosol. It localises to the nucleus. It catalyses the reaction L-aspartate 4-semialdehyde + phosphate + NADP(+) = 4-phospho-L-aspartate + NADPH + H(+). It functions in the pathway amino-acid biosynthesis; L-methionine biosynthesis via de novo pathway; L-homoserine from L-aspartate: step 2/3. It participates in amino-acid biosynthesis; L-threonine biosynthesis; L-threonine from L-aspartate: step 2/5. Catalyzes the NADPH-dependent formation of L-aspartate 4-semialdehyde (L-ASA) by the reductive dephosphorylation of 4-phospho-L-aspartate. Mediates the second step in the biosynthesis of amino acids that derive from aspartate (the aspartate family of amino acids), including methioinine and threonine, the latter of which is a precursor to isoleucine. In Trichophyton rubrum (strain ATCC MYA-4607 / CBS 118892) (Athlete's foot fungus), this protein is Aspartate-semialdehyde dehydrogenase.